A 156-amino-acid polypeptide reads, in one-letter code: Probable cyclic pyranopterin monophosphate synthase (156 aa).

Residues 74–76 (MCH) and 110–111 (ME) each bind substrate. Aspartate 125 is an active-site residue.

The protein belongs to the MoaC family. As to quaternary structure, homohexamer; trimer of dimers.

It carries out the reaction (8S)-3',8-cyclo-7,8-dihydroguanosine 5'-triphosphate = cyclic pyranopterin phosphate + diphosphate. It functions in the pathway cofactor biosynthesis; molybdopterin biosynthesis. Its function is as follows. Catalyzes the conversion of (8S)-3',8-cyclo-7,8-dihydroguanosine 5'-triphosphate to cyclic pyranopterin monophosphate (cPMP). This chain is Probable cyclic pyranopterin monophosphate synthase, found in Methanospirillum hungatei JF-1 (strain ATCC 27890 / DSM 864 / NBRC 100397 / JF-1).